The following is a 141-amino-acid chain: Large ribosomal subunit protein uL16 (141 aa).

This sequence belongs to the universal ribosomal protein uL16 family. As to quaternary structure, part of the 50S ribosomal subunit.

Functionally, binds 23S rRNA and is also seen to make contacts with the A and possibly P site tRNAs. In Kosmotoga olearia (strain ATCC BAA-1733 / DSM 21960 / TBF 19.5.1), this protein is Large ribosomal subunit protein uL16.